The chain runs to 233 residues: Probable F-box protein At3g56670 (233 aa).

One can recognise an F-box domain in the interval 22-69; the sequence is HGGVIDIPLNTDSGVTKNTPGEIALLRFKSVSKLWSSIISSRRDFIES.

In Arabidopsis thaliana (Mouse-ear cress), this protein is Probable F-box protein At3g56670.